Reading from the N-terminus, the 107-residue chain is Universal stress protein B homolog (107 aa).

2 helical membrane-spanning segments follow: residues 6 to 23 (TILF…ARYF) and 89 to 106 (LFIL…SSFI).

The protein belongs to the universal stress protein B family.

Its subcellular location is the cell inner membrane. The sequence is that of Universal stress protein B homolog from Vibrio atlanticus (strain LGP32) (Vibrio splendidus (strain Mel32)).